Reading from the N-terminus, the 310-residue chain is ADP-L-glycero-D-manno-heptose-6-epimerase (310 aa).

Residues 10–11 (FI), 31–32 (DN), Lys38, Lys53, 75–79 (EGACS), and Asn92 each bind NADP(+). Tyr140 functions as the Proton acceptor in the catalytic mechanism. Residue Lys144 coordinates NADP(+). Position 169 (Asn169) interacts with substrate. NADP(+) is bound by residues Val170 and Lys178. The Proton acceptor role is filled by Lys178. Residues Ser180, His187, 201 to 204 (FEGS), Arg209, and Tyr272 contribute to the substrate site.

It belongs to the NAD(P)-dependent epimerase/dehydratase family. HldD subfamily. In terms of assembly, homopentamer. It depends on NADP(+) as a cofactor.

It catalyses the reaction ADP-D-glycero-beta-D-manno-heptose = ADP-L-glycero-beta-D-manno-heptose. It participates in nucleotide-sugar biosynthesis; ADP-L-glycero-beta-D-manno-heptose biosynthesis; ADP-L-glycero-beta-D-manno-heptose from D-glycero-beta-D-manno-heptose 7-phosphate: step 4/4. Its function is as follows. Catalyzes the interconversion between ADP-D-glycero-beta-D-manno-heptose and ADP-L-glycero-beta-D-manno-heptose via an epimerization at carbon 6 of the heptose. The sequence is that of ADP-L-glycero-D-manno-heptose-6-epimerase from Salmonella heidelberg (strain SL476).